The following is a 387-amino-acid chain: Probable serine protease FE772_23060 (387 aa).

The protein belongs to the peptidase S1 family.

Possibly a dedicated protease for substrate gasdermin bGSDM; cleaves the bGSDM precursor, releasing the pore-forming moiety, which integrates into the membrane and triggers cell death. Involved in defense against bacteriophages. When this probable 4 gene operon (bGSDM-FE772_23060-FE772_23065-FE772_23070) is inserted into E.coli it provides nearly 100-fold protection against phages T5 and T6 and about 8-fold against phage T4. The operon without bGSDM no longer protects against phage. In Lysobacter enzymogenes, this protein is Probable serine protease FE772_23060.